Reading from the N-terminus, the 128-residue chain is Protein BEX1 (128 aa).

The disordered stretch occupies residues 1–55; the sequence is MESKDQGAKNLNMENDHQKKEEKEEKPQDTIKREPVVAPTFEAGKNCAPRGGRRR. Residues 14-35 show a composition bias toward basic and acidic residues; that stretch reads ENDHQKKEEKEEKPQDTIKREP. Serine 105 bears the Phosphoserine; by PKB/AKT1 mark. The tract at residues 107-128 is disordered; that stretch reads SLRAVSTDPPHHDHHDEFCLMP. Residues 115–128 show a composition bias toward basic and acidic residues; it reads PPHHDHHDEFCLMP. The segment at 117–121 is his cluster; sequence HHDHH. Residue cysteine 125 participates in Zn(2+) binding.

Belongs to the BEX family. As to quaternary structure, interacts with neurotrophin receptor p75NTR/NGFR. Interacts with OMP. In terms of processing, phosphorylated. Phosphorylation of Ser-105 protects it from the proteasome. Ubiquitinated. Degraded by the proteasome. In terms of tissue distribution, expressed in the central nervous system. Expressed in Schwann cells from newborn sciatic nerve.

It localises to the nucleus. It is found in the cytoplasm. Functionally, signaling adapter molecule involved in p75NTR/NGFR signaling. Plays a role in cell cycle progression and neuronal differentiation. Inhibits neuronal differentiation in response to nerve growth factor (NGF). May act as a link between the cell cycle and neurotrophic factor signaling, possibly by functioning as an upstream modulator of receptor signaling, coordinating biological responses to external signals with internal cellular states. In absence of reductive stress, acts as a pseudosubstrate for the CRL2(FEM1B) complex: associates with FEM1B via zinc, thereby preventing association between FEM1B and its substrates. The protein is Protein BEX1 (Bex1) of Rattus norvegicus (Rat).